The chain runs to 253 residues: E3 ubiquitin-protein ligase MARCHF3 (253 aa).

The RING-CH-type zinc finger occupies 63–123; the sequence is SPFNDRPMCR…ELCHFRFAVE (61 aa). Residues cysteine 71, cysteine 74, cysteine 87, cysteine 89, histidine 97, cysteine 100, cysteine 113, and cysteine 116 each coordinate Zn(2+). The next 2 membrane-spanning stretches (helical) occupy residues 145-165 and 182-202; these read LFGDMVCFLFITPLATISGWL and AVGLIALTVALFTIYLFWTLV. Residues serine 237 and serine 243 each carry the phosphoserine modification.

Interacts with MARCHF2 and STX6.

The protein localises to the cytoplasmic vesicle membrane. It is found in the early endosome membrane. It catalyses the reaction S-ubiquitinyl-[E2 ubiquitin-conjugating enzyme]-L-cysteine + [acceptor protein]-L-lysine = [E2 ubiquitin-conjugating enzyme]-L-cysteine + N(6)-ubiquitinyl-[acceptor protein]-L-lysine.. The protein operates within protein modification; protein ubiquitination. E3 ubiquitin-protein ligase which may be involved in endosomal trafficking. E3 ubiquitin ligases accept ubiquitin from an E2 ubiquitin-conjugating enzyme in the form of a thioester and then directly transfer the ubiquitin to targeted substrates. The sequence is that of E3 ubiquitin-protein ligase MARCHF3 from Homo sapiens (Human).